Consider the following 428-residue polypeptide: C4-dicarboxylate transport protein (428 aa).

The next 8 helical transmembrane spans lie at 8 to 28, 44 to 64, 76 to 96, 142 to 162, 184 to 204, 222 to 242, 326 to 346, and 352 to 372; these read SLYFQVLTAIAIGILLGHFYP, LIKMIIAPVIFCTVVTGIAGM, VALLYFEIVSTIALIIGLIIV, IGAFASGNILQVLLFAVLFGF, VIFGIINMIMRLAPIGAFGAM, LIICFYITCILFVVLVLGSIA, IVHQITLLIVLLLSSKGAAGV, and IVLAATLSAVGHLPVAGLALI.

The protein belongs to the dicarboxylate/amino acid:cation symporter (DAACS) (TC 2.A.23) family.

It is found in the cell inner membrane. Functionally, responsible for the transport of dicarboxylates such as succinate, fumarate, and malate from the periplasm across the membrane. The sequence is that of C4-dicarboxylate transport protein from Escherichia coli O127:H6 (strain E2348/69 / EPEC).